A 156-amino-acid polypeptide reads, in one-letter code: Ribosomal RNA large subunit methyltransferase H (156 aa).

Residues Leu-73, Gly-104, and Leu-123–Leu-128 each bind S-adenosyl-L-methionine.

This sequence belongs to the RNA methyltransferase RlmH family. In terms of assembly, homodimer.

It is found in the cytoplasm. The catalysed reaction is pseudouridine(1915) in 23S rRNA + S-adenosyl-L-methionine = N(3)-methylpseudouridine(1915) in 23S rRNA + S-adenosyl-L-homocysteine + H(+). Functionally, specifically methylates the pseudouridine at position 1915 (m3Psi1915) in 23S rRNA. The polypeptide is Ribosomal RNA large subunit methyltransferase H (Shewanella baltica (strain OS223)).